Here is a 192-residue protein sequence, read N- to C-terminus: MLITVSGPAGSGKSTLAKSLADALNYEHVSGGDIFRSLAEERGMTPLELNKAAEEDDQIDRDLDRKLRDIAAERDDLVLESRLAGWMAGEYADMKLWLTAPLDVRADRIATRENKPFEQAKTETRERGDSEAQRYSDYYDIDFDDLSIYDLSVNTARWDPQGVLSVTLHAVESYSPDGDEGKAPVENIRYEF.

ATP is bound at residue 7-15 (GPAGSGKST).

Belongs to the cytidylate kinase family. Type 2 subfamily.

Its subcellular location is the cytoplasm. The enzyme catalyses CMP + ATP = CDP + ADP. The catalysed reaction is dCMP + ATP = dCDP + ADP. This is Cytidylate kinase from Haloarcula marismortui (strain ATCC 43049 / DSM 3752 / JCM 8966 / VKM B-1809) (Halobacterium marismortui).